We begin with the raw amino-acid sequence, 123 residues long: Ribosome-binding factor A (123 aa).

Belongs to the RbfA family. As to quaternary structure, monomer. Binds 30S ribosomal subunits, but not 50S ribosomal subunits or 70S ribosomes.

It is found in the cytoplasm. Functionally, one of several proteins that assist in the late maturation steps of the functional core of the 30S ribosomal subunit. Associates with free 30S ribosomal subunits (but not with 30S subunits that are part of 70S ribosomes or polysomes). Required for efficient processing of 16S rRNA. May interact with the 5'-terminal helix region of 16S rRNA. In Cupriavidus metallidurans (strain ATCC 43123 / DSM 2839 / NBRC 102507 / CH34) (Ralstonia metallidurans), this protein is Ribosome-binding factor A.